Consider the following 331-residue polypeptide: Glyceraldehyde-3-phosphate dehydrogenase (331 aa).

Residues 12–13, aspartate 34, arginine 78, and threonine 120 each bind NAD(+); that span reads RI. Residues 149–151, threonine 180, 209–210, and arginine 232 contribute to the D-glyceraldehyde 3-phosphate site; these read SCT and TG. Cysteine 150 (nucleophile) is an active-site residue. Asparagine 314 contacts NAD(+).

It belongs to the glyceraldehyde-3-phosphate dehydrogenase family. In terms of assembly, homotetramer.

It is found in the cytoplasm. The enzyme catalyses D-glyceraldehyde 3-phosphate + phosphate + NAD(+) = (2R)-3-phospho-glyceroyl phosphate + NADH + H(+). The protein operates within carbohydrate degradation; glycolysis; pyruvate from D-glyceraldehyde 3-phosphate: step 1/5. Catalyzes the oxidative phosphorylation of glyceraldehyde 3-phosphate (G3P) to 1,3-bisphosphoglycerate (BPG) using the cofactor NAD. The first reaction step involves the formation of a hemiacetal intermediate between G3P and a cysteine residue, and this hemiacetal intermediate is then oxidized to a thioester, with concomitant reduction of NAD to NADH. The reduced NADH is then exchanged with the second NAD, and the thioester is attacked by a nucleophilic inorganic phosphate to produce BPG. This Shimwellia blattae (strain ATCC 29907 / DSM 4481 / JCM 1650 / NBRC 105725 / CDC 9005-74) (Escherichia blattae) protein is Glyceraldehyde-3-phosphate dehydrogenase (gapA).